A 292-amino-acid polypeptide reads, in one-letter code: MAFVSMKELLQEAKEHHYAIGQFNINGLQWTKAILEAAEEERSPVIAAASDRLIDYLGGFKTVSAMVAALIEEMSISVPVVLHLDHGKSPERCKQAIDAGFSSVMIDGSHSPIDENIAMTKEVVSYAGVRNVSVEAEVGTVGGMEDGLIGGVQYADIGECERIVKETGIDALAAALGSVHGKYQGEPNLGFKEMEEISRVTDIPLVLHGASGIPADQIARTIRLGHAKININTECMVAWTEKTRSIFKDNPDLYEPRAYMTPGISAVKETVKHKMREFGSSGKAVCTQKIEI.

Asp85 acts as the Proton donor in catalysis. Zn(2+)-binding residues include His86 and His180. A dihydroxyacetone phosphate-binding site is contributed by Gly181. Position 208 (His208) interacts with Zn(2+). Residues 209–211 and 230–233 contribute to the dihydroxyacetone phosphate site; these read GAS and NINT. Residue Thr233 is modified to Phosphothreonine.

It belongs to the class II fructose-bisphosphate aldolase family. IolJ subfamily. It depends on Zn(2+) as a cofactor.

The enzyme catalyses 6-phospho-5-dehydro-2-deoxy-D-gluconate = 3-oxopropanoate + dihydroxyacetone phosphate. Its pathway is polyol metabolism; myo-inositol degradation into acetyl-CoA; acetyl-CoA from myo-inositol: step 6/7. Functionally, produces dihydroxyacetone phosphate (DHAP or glycerone phosphate) and malonic semialdehyde (MSA or 3-oxopropanoate) from 6-phospho-5-dehydro-2-deoxy-D-gluconate (DKGP). The protein is 6-phospho-5-dehydro-2-deoxy-D-gluconate aldolase (iolJ) of Bacillus licheniformis (strain ATCC 14580 / DSM 13 / JCM 2505 / CCUG 7422 / NBRC 12200 / NCIMB 9375 / NCTC 10341 / NRRL NRS-1264 / Gibson 46).